We begin with the raw amino-acid sequence, 494 residues long: Inositol-trisphosphate 3-kinase homolog (494 aa).

Residues serine 206, lysine 218, 260–262 (EDL), and aspartate 276 each bind ATP. Substrate is bound by residues lysine 278 and 322-329 (KLRYMQFR). ATP contacts are provided by lysine 346 and aspartate 426. Lysine 429 contributes to the substrate binding site.

This sequence belongs to the inositol phosphokinase (IPK) family. In terms of tissue distribution, expressed in spermatheca.

The catalysed reaction is 1D-myo-inositol 1,4,5-trisphosphate + ATP = 1D-myo-inositol 1,3,4,5-tetrakisphosphate + ADP + H(+). Unlike mammalian IP3K, may not be regulated by calmodulin. In terms of biological role, probably by regulating inositol 1,4,5-trisphosphate levels, negatively regulates posterior body wall muscle contractions required for defecation and let-23 signaling pathway that controls spermathecal dilation and ovulation. May also regulate ovulation downstream of actin cross-linker fln-1. The sequence is that of Inositol-trisphosphate 3-kinase homolog from Caenorhabditis elegans.